Reading from the N-terminus, the 282-residue chain is ATP synthase gamma chain (282 aa).

The protein belongs to the ATPase gamma chain family. As to quaternary structure, F-type ATPases have 2 components, CF(1) - the catalytic core - and CF(0) - the membrane proton channel. CF(1) has five subunits: alpha(3), beta(3), gamma(1), delta(1), epsilon(1). CF(0) has three main subunits: a, b and c.

The protein resides in the cell membrane. In terms of biological role, produces ATP from ADP in the presence of a proton gradient across the membrane. The gamma chain is believed to be important in regulating ATPase activity and the flow of protons through the CF(0) complex. The protein is ATP synthase gamma chain of Clostridium botulinum (strain Loch Maree / Type A3).